The primary structure comprises 766 residues: MQIRYFLALSLLPNIVLADEPTTTEAPSLQCVVAPPVSRSFEDREALTGISDDQIVIISDHSSVAYNNQAEFSGDVSFSQGLRHIAADNAVLDQKEQRLNADGNLIFKDELFTVTADTLEAQMSTNNATLKGAQYWLHGQQVHGDAEKLQITSDNNLLLTKTNFTTCPPGDESWLLEADMIKIDSKEEWGEIWNAKLRIANIPVLYIPYMTVPVSDKRKTGFLFPSFSTSTTNGVEVSTPYYWNIAPEFDLTFTPDFMSSRGLYTKTEFRYLAGEQQNGQFNVEYLGSDSKLTSNADRYLYHWSHQGAVNKNWRVRSDYTDVSDNNYFNDLNSDVNQSTDNQLSRIGEASYFERDWDFNMRVQDIKVLGEDEKPYQVMPQLNFNYRSADIFNTIDFKFNSELTNFRHQDNEYNTATRLHLVPSLIWPIQGPAGSFTSEVKLLQTQYWQQNIDEDSTLNDSISRTIPQARLHGQVNFERATQLFDEQYRQTLEPQIQYLYVGYEDQSNIGIYDTAQLQEDYYGLFRDRQYSGLDRVADANQFTLGFTTRLFDQTNREKLKFSVGQIMYLEDSKVSIDDTYEETAQSTSVLAAELDAQLYNDWFVSGSVQHDTETGENKKNEVTLDYRPSSDRLLQLSYRYVPDLLNTNTNDQVDISQAGVRTSWPISDNLYFVGNYYYDLNESRNIETYTGVQYESCCWALRLSYHYRIKTNYDDDLSESIDGREEFESGVYLNFVIKGLGGSGPLGVDDMLNEGLFNYRKPLYLRN.

The N-terminal stretch at 1–18 (MQIRYFLALSLLPNIVLA) is a signal peptide.

It belongs to the LptD family. Component of the lipopolysaccharide transport and assembly complex. Interacts with LptE and LptA.

It is found in the cell outer membrane. Its function is as follows. Together with LptE, is involved in the assembly of lipopolysaccharide (LPS) at the surface of the outer membrane. In Shewanella frigidimarina (strain NCIMB 400), this protein is LPS-assembly protein LptD.